Consider the following 155-residue polypeptide: Large ribosomal subunit protein uL22 (155 aa).

The protein belongs to the universal ribosomal protein uL22 family. Part of the 50S ribosomal subunit.

Functionally, this protein binds specifically to 23S rRNA. It makes multiple contacts with different domains of the 23S rRNA in the assembled 50S subunit and ribosome. The globular domain of the protein is located near the polypeptide exit tunnel on the outside of the subunit, while an extended beta-hairpin is found that lines the wall of the exit tunnel in the center of the 70S ribosome. This Pyrococcus horikoshii (strain ATCC 700860 / DSM 12428 / JCM 9974 / NBRC 100139 / OT-3) protein is Large ribosomal subunit protein uL22.